Reading from the N-terminus, the 222-residue chain is Eukaryotic translation initiation factor 3 subunit K (222 aa).

The PCI domain occupies 46–208 (YDLEANLAVL…KIKTKNITEK (163 aa)).

This sequence belongs to the eIF-3 subunit K family. Component of the eukaryotic translation initiation factor 3 (eIF-3) complex. The eIF-3 complex interacts with pix.

It localises to the cytoplasm. Its function is as follows. Component of the eukaryotic translation initiation factor 3 (eIF-3) complex, which is involved in protein synthesis of a specialized repertoire of mRNAs and, together with other initiation factors, stimulates binding of mRNA and methionyl-tRNAi to the 40S ribosome. The eIF-3 complex specifically targets and initiates translation of a subset of mRNAs involved in cell proliferation. The chain is Eukaryotic translation initiation factor 3 subunit K from Drosophila sechellia (Fruit fly).